We begin with the raw amino-acid sequence, 484 residues long: Ribosome biogenesis protein YTM1 (484 aa).

The segment at 13-95 (VKVTFTTTEA…ESNLTLQYVR (83 aa)) is ubiquitin-like (UBL) domain. WD repeat units follow at residues 122–161 (SPSG…IATS), 168–206 (GHTA…HFSG), 216–255 (GHTG…APEA), 288–328 (IHSA…VVTT), 330–373 (STSH…ATTS), 379–419 (GHAN…PATQ), and 448–484 (GEGC…VVAE).

It belongs to the WD repeat WDR12/YTM1 family. In terms of assembly, component of the NOP7 complex, composed of ERB1, NOP7 and YTM1. The complex is held together by ERB1, which interacts with NOP7 via its N-terminal domain and with YTM1 via a high-affinity interaction between the seven-bladed beta-propeller domains of the 2 proteins. The NOP7 complex associates with the 66S pre-ribosome. Interacts (via UBL domain) with MDN1 (via VWFA/MIDAS domain).

The protein resides in the nucleus. Its subcellular location is the nucleolus. The protein localises to the nucleoplasm. Component of the NOP7 complex, which is required for maturation of the 25S and 5.8S ribosomal RNAs and formation of the 60S ribosome. The sequence is that of Ribosome biogenesis protein YTM1 from Chaetomium globosum (strain ATCC 6205 / CBS 148.51 / DSM 1962 / NBRC 6347 / NRRL 1970) (Soil fungus).